Here is a 384-residue protein sequence, read N- to C-terminus: Putative glutamate--cysteine ligase 2-2 (384 aa).

The protein belongs to the glutamate--cysteine ligase type 2 family. YbdK subfamily.

It carries out the reaction L-cysteine + L-glutamate + ATP = gamma-L-glutamyl-L-cysteine + ADP + phosphate + H(+). In terms of biological role, ATP-dependent carboxylate-amine ligase which exhibits weak glutamate--cysteine ligase activity. This chain is Putative glutamate--cysteine ligase 2-2, found in Rubrobacter xylanophilus (strain DSM 9941 / JCM 11954 / NBRC 16129 / PRD-1).